The sequence spans 291 residues: MRLLPRLLLLLLLVFPATVLFRGGPRGSLAVAQDLTEDEETVEDSIIEDEDDEAEVEEDEPTDLVEDKEEEDVSGEPEASPSADTTILFVKGEDFPANNIVKFLVGFTNKGTEDFIVESLDASFRYPQDYQFYIQNFTALPLNTVVPPQRQATFEYSFIPAEPMGGRPFGLVINLNYKDLNGNVFQDAVFNQTVTVIEREDGLDGETIFMYMFLAGLGLLVIVGLHQLLESRKRKRPVQKVEMGTSSQNDVDMSWIPQETLNQIMQSRRDKASPRRLPRKRAQKRSVGSDE.

A signal peptide spans 1–20 (MRLLPRLLLLLLLVFPATVL). At 21-207 (FRGGPRGSLA…EREDGLDGET (187 aa)) the chain is on the lumenal side. The disordered stretch occupies residues 34–83 (DLTEDEETVEDSIIEDEDDEAEVEEDEPTDLVEDKEEEDVSGEPEASPSA). A compositionally biased stretch (acidic residues) spans 35–75 (LTEDEETVEDSIIEDEDDEAEVEEDEPTDLVEDKEEEDVSG). N-linked (GlcNAc...) asparagine glycans are attached at residues Asn136 and Asn191. A helical membrane pass occupies residues 208–228 (IFMYMFLAGLGLLVIVGLHQL). The Cytoplasmic segment spans residues 229 to 291 (LESRKRKRPV…AQKRSVGSDE (63 aa)). Ser247 is modified (phosphoserine). Thr260 is subject to Phosphothreonine. A disordered region spans residues 263–291 (QIMQSRRDKASPRRLPRKRAQKRSVGSDE). Ser273 bears the Phosphoserine mark. Basic residues predominate over residues 274–284 (PRRLPRKRAQK).

The protein belongs to the TRAP-alpha family. In terms of assembly, heterotetramer of TRAP-alpha, TRAP-beta, TRAP-delta and TRAP-gamma. Interacts with palmitoylated calnexin (CALX), the interaction is required for efficient folding of glycosylated proteins. In terms of processing, phosphorylated in its cytoplasmic tail.

It is found in the endoplasmic reticulum membrane. TRAP proteins are part of a complex whose function is to bind calcium to the ER membrane and thereby regulate the retention of ER resident proteins. May be involved in the recycling of the translocation apparatus after completion of the translocation process or may function as a membrane-bound chaperone facilitating folding of translocated proteins. This Pongo abelii (Sumatran orangutan) protein is Translocon-associated protein subunit alpha (SSR1).